The sequence spans 754 residues: Glutathione biosynthesis bifunctional protein GshAB (754 aa).

Residues 1–332 (MTLNQLLQKL…QGHALNEKIA (332 aa)) are glutamate--cysteine ligase. The 259-residue stretch at 488–746 (KKILADAGFP…ITTKILDKLF (259 aa)) folds into the ATP-grasp domain. 515–573 (PLIKDKQIVVKPKSTNFGLGISIFQEPASLDNYQKALEIAFAEDTSVLVEEFIPGTEYR) contributes to the ATP binding site. Asp695, Glu716, and Asn718 together coordinate Mg(2+). Residues Asp695, Glu716, and Asn718 each contribute to the Mn(2+) site.

In the N-terminal section; belongs to the glutamate--cysteine ligase type 1 family. Type 2 subfamily. Monomer. Mg(2+) is required as a cofactor. Requires Mn(2+) as cofactor.

The catalysed reaction is L-cysteine + L-glutamate + ATP = gamma-L-glutamyl-L-cysteine + ADP + phosphate + H(+). It carries out the reaction gamma-L-glutamyl-L-cysteine + glycine + ATP = glutathione + ADP + phosphate + H(+). It functions in the pathway sulfur metabolism; glutathione biosynthesis; glutathione from L-cysteine and L-glutamate: step 1/2. It participates in sulfur metabolism; glutathione biosynthesis; glutathione from L-cysteine and L-glutamate: step 2/2. Synthesizes glutathione from L-glutamate and L-cysteine via gamma-L-glutamyl-L-cysteine. The protein is Glutathione biosynthesis bifunctional protein GshAB of Streptococcus thermophilus (strain CNRZ 1066).